A 144-amino-acid polypeptide reads, in one-letter code: 3-dehydroquinate dehydratase (144 aa).

Tyrosine 22 functions as the Proton acceptor in the catalytic mechanism. The substrate site is built by asparagine 73, histidine 79, and aspartate 86. The Proton donor role is filled by histidine 99. Residues 100-101 and arginine 110 contribute to the substrate site; that span reads LS.

The protein belongs to the type-II 3-dehydroquinase family. Homododecamer.

The enzyme catalyses 3-dehydroquinate = 3-dehydroshikimate + H2O. The protein operates within metabolic intermediate biosynthesis; chorismate biosynthesis; chorismate from D-erythrose 4-phosphate and phosphoenolpyruvate: step 3/7. In terms of biological role, catalyzes a trans-dehydration via an enolate intermediate. In Trichlorobacter lovleyi (strain ATCC BAA-1151 / DSM 17278 / SZ) (Geobacter lovleyi), this protein is 3-dehydroquinate dehydratase.